We begin with the raw amino-acid sequence, 274 residues long: NADPH-dependent 7-cyano-7-deazaguanine reductase (274 aa).

80–82 is a substrate binding site; that stretch reads VES. 82–83 is a binding site for NADPH; it reads SK. The active-site Thioimide intermediate is the cysteine 181. Catalysis depends on aspartate 188, which acts as the Proton donor. 220–221 serves as a coordination point for substrate; sequence HE. 249 to 250 is a binding site for NADPH; it reads RG.

This sequence belongs to the GTP cyclohydrolase I family. QueF type 2 subfamily. As to quaternary structure, homodimer.

It is found in the cytoplasm. It carries out the reaction 7-aminomethyl-7-carbaguanine + 2 NADP(+) = 7-cyano-7-deazaguanine + 2 NADPH + 3 H(+). It functions in the pathway tRNA modification; tRNA-queuosine biosynthesis. Catalyzes the NADPH-dependent reduction of 7-cyano-7-deazaguanine (preQ0) to 7-aminomethyl-7-deazaguanine (preQ1). The chain is NADPH-dependent 7-cyano-7-deazaguanine reductase from Burkholderia pseudomallei (strain 1710b).